The following is a 475-amino-acid chain: Ubiquitin carboxyl-terminal hydrolase calypso (475 aa).

Residues 44–275 (GWLELESDPG…IRFNLMAVVP (232 aa)) form the UCH catalytic domain. Cys-130 (nucleophile) is an active-site residue. His-212 serves as the catalytic Proton donor. Residues 333-360 (AKDLQLLLKNLDTEIAINEQNLADENDR) are a coiled coil. In terms of domain architecture, ULD spans 374–402 (NYDKFICTFLSMLAHQGVLGELVSQHLLP). The tract at residues 404–475 (KKVSGQSAAN…KGRNKCRKRK (72 aa)) is positively charged C-terminal tail required for binding nucleosomes. The tract at residues 411 to 475 (AANRISKQNS…KGRNKCRKRK (65 aa)) is disordered. Low complexity predominate over residues 419–460 (NSAASSAGANAGAAAGVTPKSQQQQQQPQTAASKNGKSPGKT). Basic residues predominate over residues 461–475 (PGRRRKGRNKCRKRK).

This sequence belongs to the peptidase C12 family. BAP1 subfamily. In terms of assembly, catalytic component of the polycomb repressive deubiquitinase (PR-DUB) complex, at least composed of caly/calypso, Asx and sba (MBD5/6 homolog). The PR-DUB complex associates with nucleosomes to mediate deubiquitination of histone H2AK118ub1 substrates; the association requires the positively charged C-terminal tail of caly, probably due to direct binding of DNA. Interacts (via ULD domain) with Asx (via DEUBAD domain); the interaction produces a stable heterodimer with a composite binding site for ubiquitin. Homodimerizes (via coiled-coil hinge-region between the UCH and ULD domains) to mediate assembly of 2 copies of the caly-Asx heterodimer into a bisymmetric tetramer; dimerization enhances PR-DUB association with nucleosomes.

It is found in the nucleus. The enzyme catalyses Thiol-dependent hydrolysis of ester, thioester, amide, peptide and isopeptide bonds formed by the C-terminal Gly of ubiquitin (a 76-residue protein attached to proteins as an intracellular targeting signal).. In terms of biological role, catalytic component of the polycomb repressive deubiquitinase (PR-DUB) complex, a complex that specifically mediates deubiquitination of histone H2A monoubiquitinated at 'Lys-119' (H2AK118ub1). Mediates bisymmetric organization of the PR-DUB complex and is involved in association with nucleosomes to mediate deubiquitination. Does not deubiquitinate monoubiquitinated histone H2B. Required to maintain the transcriptionally repressive state of homeotic genes throughout development. The PR-DUB complex has weak or no activity toward 'Lys-48'- and 'Lys-63'-linked polyubiquitin chains. Polycomb group (PcG) protein. The protein is Ubiquitin carboxyl-terminal hydrolase calypso of Drosophila persimilis (Fruit fly).